Consider the following 617-residue polypeptide: Dihydroxy-acid dehydratase (617 aa).

Aspartate 81 is a binding site for Mg(2+). Residue cysteine 122 coordinates [2Fe-2S] cluster. Positions 123 and 124 each coordinate Mg(2+). At lysine 124 the chain carries N6-carboxylysine. Cysteine 195 contacts [2Fe-2S] cluster. Glutamate 491 is a Mg(2+) binding site. Serine 517 serves as the catalytic Proton acceptor.

The protein belongs to the IlvD/Edd family. In terms of assembly, homodimer. Requires [2Fe-2S] cluster as cofactor. It depends on Mg(2+) as a cofactor.

The enzyme catalyses (2R)-2,3-dihydroxy-3-methylbutanoate = 3-methyl-2-oxobutanoate + H2O. It carries out the reaction (2R,3R)-2,3-dihydroxy-3-methylpentanoate = (S)-3-methyl-2-oxopentanoate + H2O. It participates in amino-acid biosynthesis; L-isoleucine biosynthesis; L-isoleucine from 2-oxobutanoate: step 3/4. Its pathway is amino-acid biosynthesis; L-valine biosynthesis; L-valine from pyruvate: step 3/4. Functions in the biosynthesis of branched-chain amino acids. Catalyzes the dehydration of (2R,3R)-2,3-dihydroxy-3-methylpentanoate (2,3-dihydroxy-3-methylvalerate) into 2-oxo-3-methylpentanoate (2-oxo-3-methylvalerate) and of (2R)-2,3-dihydroxy-3-methylbutanoate (2,3-dihydroxyisovalerate) into 2-oxo-3-methylbutanoate (2-oxoisovalerate), the penultimate precursor to L-isoleucine and L-valine, respectively. This Buchnera aphidicola subsp. Diuraphis noxia protein is Dihydroxy-acid dehydratase.